A 208-amino-acid polypeptide reads, in one-letter code: Peroxiredoxin (208 aa).

The 155-residue stretch at 2-156 (PLLGDDFPQL…IVRAVKALQT (155 aa)) folds into the Thioredoxin domain. Cysteine 44 serves as the catalytic Cysteine sulfenic acid (-SOH) intermediate. Arginine 119 contacts substrate.

The protein belongs to the peroxiredoxin family. Prx6 subfamily. In terms of assembly, homodecamer. Pentamer of dimers that assemble into a ring structure.

Its subcellular location is the cytoplasm. It catalyses the reaction a hydroperoxide + [thioredoxin]-dithiol = an alcohol + [thioredoxin]-disulfide + H2O. Thiol-specific peroxidase that catalyzes the reduction of hydrogen peroxide and organic hydroperoxides to water and alcohols, respectively. Plays a role in cell protection against oxidative stress by detoxifying peroxides. In Treponema denticola (strain ATCC 35405 / DSM 14222 / CIP 103919 / JCM 8153 / KCTC 15104), this protein is Peroxiredoxin.